Consider the following 394-residue polypeptide: Elongation factor Tu 1 (394 aa).

A tr-type G domain is found at 10–204; it reads KPHVNVGTIG…ALDSYIPEPE (195 aa). The interval 19–26 is G1; that stretch reads GHVDHGKT. 19 to 26 provides a ligand contact to GTP; sequence GHVDHGKT. Residue Thr26 participates in Mg(2+) binding. The G2 stretch occupies residues 60–64; sequence GITIN. Positions 81 to 84 are G3; the sequence is DCPG. GTP-binding positions include 81-85 and 136-139; these read DCPGH and NKCD. Residues 136 to 139 form a G4 region; the sequence is NKCD. A G5 region spans residues 174–176; that stretch reads SAL.

This sequence belongs to the TRAFAC class translation factor GTPase superfamily. Classic translation factor GTPase family. EF-Tu/EF-1A subfamily. In terms of assembly, monomer.

The protein resides in the cytoplasm. It catalyses the reaction GTP + H2O = GDP + phosphate + H(+). In terms of biological role, GTP hydrolase that promotes the GTP-dependent binding of aminoacyl-tRNA to the A-site of ribosomes during protein biosynthesis. The sequence is that of Elongation factor Tu 1 from Shewanella sp. (strain MR-4).